The chain runs to 287 residues: Putative sugar uptake protein M6_Spy1874 (287 aa).

10 consecutive transmembrane segments (helical) span residues 4 to 26 (IFYA…KIGG), 33 to 50 (LGMT…WLIV), 55 to 72 (TLQL…WSIG), 85 to 107 (VSVA…GVLV), 117 to 134 (FVVG…FYFS), 154 to 171 (FRAL…AVLF), 181 to 200 (SVIL…FMSF), 207 to 229 (YVIK…LLAA), 234 to 256 (LAIA…ILFL), and 268 to 285 (VVTG…LGVV).

This sequence belongs to the GRP transporter (TC 2.A.7.5) family.

It is found in the cell membrane. The polypeptide is Putative sugar uptake protein M6_Spy1874 (Streptococcus pyogenes serotype M6 (strain ATCC BAA-946 / MGAS10394)).